Here is a 390-residue protein sequence, read N- to C-terminus: Pyruvate dehydrogenase E1 component subunit alpha, somatic form, mitochondrial (390 aa).

The N-terminal 29 residues, 1 to 29, are a transit peptide targeting the mitochondrion; the sequence is MRKMLAAVSRVLSGASQKPASRVLVASRN. Position 63 is an N6-acetyllysine; alternate (K63). Position 63 is an N6-succinyllysine; alternate (K63). Pyruvate is bound by residues H92, Y118, R119, A157, G165, V167, D196, G197, A198, N225, and Y227. Residues Y118 and R119 each contribute to the thiamine diphosphate site. 6 residues coordinate thiamine diphosphate: G165, V167, D196, G197, A198, and N225. D196 serves as a coordination point for Mg(2+). Residues N225 and Y227 each contribute to the Mg(2+) site. A Phosphoserine; by PDK1 modification is found at S232. Residue K244 is modified to N6-acetyllysine; alternate. An N6-succinyllysine; alternate modification is found at K244. K277 carries the post-translational modification N6-succinyllysine. H292 is a binding site for thiamine diphosphate. A Phosphoserine; by PDK1, PDK2, PDK3 and PDK4 modification is found at S293. Phosphoserine is present on S295. The residue at position 300 (S300) is a Phosphoserine; by PDK1, PDK2, PDK3 and PDK4. Position 301 is a phosphotyrosine (Y301). An N6-acetyllysine; alternate modification is found at K313. Residue K313 is modified to N6-succinyllysine; alternate. An N6-acetyllysine mark is found at K321 and K336. K385 is modified (N6-succinyllysine).

Heterotetramer of two PDHA1 and two PDHB subunits. The heterotetramer interacts with DLAT, and is part of the multimeric pyruvate dehydrogenase complex that contains multiple copies of pyruvate dehydrogenase (E1), dihydrolipoamide acetyltransferase (DLAT, E2) and lipoamide dehydrogenase (DLD, E3). These subunits are bound to an inner core composed of about 48 DLAT and 12 PDHX molecules. It depends on thiamine diphosphate as a cofactor. The cofactor is Mg(2+). In terms of processing, phosphorylation at Ser-232, Ser-293 and Ser-300 by PDK family kinases inactivates the enzyme; for this phosphorylation at a single site is sufficient. Dephosphorylation at all three sites, i.e. at Ser-232, Ser-293 and Ser-300, is required for reactivation. Post-translationally, acetylation alters the phosphorylation pattern. Deacetylated by SIRT3. In terms of tissue distribution, ubiquitous.

Its subcellular location is the mitochondrion matrix. It catalyses the reaction N(6)-[(R)-lipoyl]-L-lysyl-[protein] + pyruvate + H(+) = N(6)-[(R)-S(8)-acetyldihydrolipoyl]-L-lysyl-[protein] + CO2. Its activity is regulated as follows. Pyruvate dehydrogenase activity is inhibited by phosphorylation of PDHA1; it is reactivated by dephosphorylation. Functionally, the pyruvate dehydrogenase complex catalyzes the overall conversion of pyruvate to acetyl-CoA and CO(2), and thereby links the glycolytic pathway to the tricarboxylic cycle. The chain is Pyruvate dehydrogenase E1 component subunit alpha, somatic form, mitochondrial (PDHA1) from Homo sapiens (Human).